A 351-amino-acid chain; its full sequence is Type II restriction enzyme NmeDI (351 aa).

The catalysed reaction is Endonucleolytic cleavage of DNA to give specific double-stranded fragments with terminal 5'-phosphates.. A P subtype restriction enzyme that recognizes the double-stranded sequence 5'-N(12)RCCGGYN(12)-3' and cleaves on both sides of the recognition sequence. This Neisseria meningitidis serogroup C protein is Type II restriction enzyme NmeDI (nmeDIRP).